The chain runs to 669 residues: Dymeclin (669 aa).

The N-myristoyl glycine moiety is linked to residue glycine 2.

This sequence belongs to the dymeclin family. In terms of processing, myristoylated in vitro; myristoylation is not essential for protein targeting to Golgi compartment.

The protein resides in the cytoplasm. The protein localises to the golgi apparatus. Its function is as follows. Necessary for correct organization of Golgi apparatus. This chain is Dymeclin (DYM), found in Gallus gallus (Chicken).